Consider the following 420-residue polypeptide: Vitellogenin-3 (420 aa).

Residues 1–19 form the signal peptide; sequence MMSLRICLLATCLLVAAHA. Position 37 is a phosphothreonine (T37). Residues S177 and S178 each carry the phosphoserine modification. 2 positions are modified to sulfotyrosine: Y384 and Y390. The disordered stretch occupies residues 401 to 420; sequence GQRSPAHKQAAYHGMHHAQN.

The protein belongs to the AB hydrolase superfamily. Lipase family. In terms of processing, tyrosine sulfation occurs in the female only and plays an essential functional role. Synthesized in the fat body and ovarian follicle cells and accumulate in the oocyte.

Its subcellular location is the secreted. Its function is as follows. Vitellogenin is the major yolk protein of eggs where it is used as a food source during embryogenesis. Vitellogenins and their receptor yl/yolkless are required for maintenance of microtubule plus-end orientation towards the posterior pole of oocytes. Involved in polarized localization of germ plasm components, such as osk mRNA and vas protein, to the oocyte posterior cortex. Receptor-mediated endocytosis by yl/yolkless is crucial for actin reorganization, mediated by osk isoform A/Long, required to anchor germ plasm components to the oocyte cortex. This is Vitellogenin-3 (Yp3) from Drosophila melanogaster (Fruit fly).